A 564-amino-acid polypeptide reads, in one-letter code: Malignant brain tumor repeat protein 1 (564 aa).

MBT repeat units follow at residues 64-176, 205-327, 331-442, and 450-549; these read FTWS…MKWL, RPTE…TKAT, LEHS…LDRL, and FKWE…LRHP.

Interacts with histone H3 that is trimethylated at 'Lys-9' (H3K9me3).

This is Malignant brain tumor repeat protein 1 (mbtr-1) from Caenorhabditis elegans.